The following is a 478-amino-acid chain: Leukotoxin secretion protein D (478 aa).

Over 1 to 77 the chain is Cytoplasmic; the sequence is MKIWLSGIYE…LAVAIVLASV (77 aa). Residues 78 to 98 traverse the membrane as a helical segment; that stretch reads SKVEIVATAPGKLTFSGRSKE. Over 99–478 the chain is Periplasmic; that stretch reads IKPIENTIVQ…ESVTESLRER (380 aa).

This sequence belongs to the membrane fusion protein (MFP) (TC 8.A.1) family.

It is found in the cell inner membrane. Involved in the transport of the Leukotoxin. The polypeptide is Leukotoxin secretion protein D (lktD) (Pasteurella haemolytica-like sp. (strain 5943B)).